A 112-amino-acid polypeptide reads, in one-letter code: Putative pterin-4-alpha-carbinolamine dehydratase (112 aa).

This sequence belongs to the pterin-4-alpha-carbinolamine dehydratase family.

The enzyme catalyses (4aS,6R)-4a-hydroxy-L-erythro-5,6,7,8-tetrahydrobiopterin = (6R)-L-erythro-6,7-dihydrobiopterin + H2O. The sequence is that of Putative pterin-4-alpha-carbinolamine dehydratase from Shewanella woodyi (strain ATCC 51908 / MS32).